A 245-amino-acid chain; its full sequence is Fibroblast growth factor 13 (245 aa).

Residues 1-36 form a disordered region; it reads MAAAIASSLIRQKRQAREREKSNACKCVSSPSKGKT. The interval 1-62 is mediates targeting to the nucleus; it reads MAAAIASSLI…GSKKRRRRRP (62 aa). A mediates interaction with sodium channels region spans residues 67–201; the sequence is KGIVTKLYSR…AHFLPKPLKV (135 aa). The segment at 157-164 is tubulin-binding domain necessary and sufficient for tubulin-binding; it reads SMIYRQQQ. Ser-208 is subject to Phosphoserine. A disordered region spans residues 213-245; it reads TEFSRSGSGTPTKSRSVSGVLNGGKSMSHNEST. Over residues 215 to 245 the composition is skewed to polar residues; sequence FSRSGSGTPTKSRSVSGVLNGGKSMSHNEST.

It belongs to the heparin-binding growth factors family. As to quaternary structure, interacts with SCN8A; regulates SCN8A activity. Interacts with SCN1A; may regulate SCN1A activity. Interacts with SCN5A; the interaction is direct and may regulate SNC5A density at membranes and function. May also interact with SCN2A and SCN11A. Interacts with MAPK8IP2; may regulate the MAPK8IP2 scaffolding activity. Post-translationally, may be phosphorylated. As to expression, detected in brain, eye and heart. In brain, the different isoforms display different patterns of expression. Expressed in brain and heart (at protein level). Isoform 3 is highly expressed in cardiac myocytes while isoform 1 is the most abundant in brain.

It is found in the cell projection. Its subcellular location is the filopodium. The protein resides in the growth cone. It localises to the dendrite. The protein localises to the cell membrane. It is found in the sarcolemma. Its subcellular location is the cytoplasm. The protein resides in the nucleus. Microtubule-binding protein which directly binds tubulin and is involved in both polymerization and stabilization of microtubules. Through its action on microtubules, may participate to the refinement of axons by negatively regulating axonal and leading processes branching. Plays a crucial role in neuron polarization and migration in the cerebral cortex and the hippocampus. Regulates voltage-gated sodium channel transport and function. May also play a role in MAPK signaling. Required for the development of axonal initial segment-targeting inhibitory GABAergic synapses made by chandelier neurons. In terms of biological role, seems not to be involved in neuroblast polarization and migration but regulates axon branching. In Mus musculus (Mouse), this protein is Fibroblast growth factor 13.